Consider the following 562-residue polypeptide: Protein TBF1 (562 aa).

The segment at 376–414 (ASMSNSSSGPHSSHNNSSNSNNNGSIGLRKPKAKRTWSK) is disordered. The span at 377–400 (SMSNSSSGPHSSHNNSSNSNNNGS) shows a compositional bias: low complexity. Residues 404–460 (RKPKAKRTWSKEEEEALVEGLKEVGPSWSKILDLYGPGGKITENLKNRTQVQLKDKA) form the HTH myb-type domain. Residues 431-456 (WSKILDLYGPGGKITENLKNRTQVQL) constitute a DNA-binding region (H-T-H motif). The interval 495-562 (FSQSPNSSTI…GFDPHLEDGM (68 aa)) is disordered. Polar residues-rich tracts occupy residues 496–522 (SQSP…ATED) and 532–552 (GQNS…SDNT).

Homodimer.

The protein resides in the nucleus. Its subcellular location is the chromosome. The protein localises to the telomere. In terms of biological role, binds the telomeric double-stranded TTAGGG repeat and negatively regulates telomere length. Involved in the regulation of gene expression. 52 binding sites have been identified, distributed over 15 chromosomes. A member of the general regulatory factors (GRFs) which act as genome partitioners. Acts as a chromatin insulator which are known as STARs (Subtelomeric anti-silencing region). STARs prevent negative or positive transcription influence by extending across chromatin to a promoter. This is Protein TBF1 (TBF1) from Saccharomyces cerevisiae (strain ATCC 204508 / S288c) (Baker's yeast).